Here is a 477-residue protein sequence, read N- to C-terminus: tRNA-2-methylthio-N(6)-dimethylallyladenosine synthase (477 aa).

An MTTase N-terminal domain is found at 3 to 120; sequence KKLHIKTWGC…LPTMIKQVQE (118 aa). [4Fe-4S] cluster-binding residues include Cys-12, Cys-49, Cys-83, Cys-157, Cys-161, and Cys-164. The Radical SAM core domain maps to 143-375; the sequence is RAEGATAFVS…QHVINNQSMQ (233 aa). A TRAM domain is found at 378-441; that stretch reads RAMLGSTQRI…PNSLRGKFLR (64 aa).

This sequence belongs to the methylthiotransferase family. MiaB subfamily. In terms of assembly, monomer. [4Fe-4S] cluster serves as cofactor.

It localises to the cytoplasm. It carries out the reaction N(6)-dimethylallyladenosine(37) in tRNA + (sulfur carrier)-SH + AH2 + 2 S-adenosyl-L-methionine = 2-methylsulfanyl-N(6)-dimethylallyladenosine(37) in tRNA + (sulfur carrier)-H + 5'-deoxyadenosine + L-methionine + A + S-adenosyl-L-homocysteine + 2 H(+). In terms of biological role, catalyzes the methylthiolation of N6-(dimethylallyl)adenosine (i(6)A), leading to the formation of 2-methylthio-N6-(dimethylallyl)adenosine (ms(2)i(6)A) at position 37 in tRNAs that read codons beginning with uridine. This is tRNA-2-methylthio-N(6)-dimethylallyladenosine synthase from Aeromonas hydrophila subsp. hydrophila (strain ATCC 7966 / DSM 30187 / BCRC 13018 / CCUG 14551 / JCM 1027 / KCTC 2358 / NCIMB 9240 / NCTC 8049).